We begin with the raw amino-acid sequence, 228 residues long: Ribonuclease 3 (228 aa).

One can recognise an RNase III domain in the interval 7-136 (LNKLKNEYNI…FNGALFLDQG (130 aa)). Glu-49 provides a ligand contact to Mg(2+). Asp-53 is an active-site residue. 2 residues coordinate Mg(2+): Asp-122 and Glu-125. Residue Glu-125 is part of the active site. The DRBM domain maps to 162–228 (DYKTDLQELL…AAKAALQKFE (67 aa)). Residues 207 to 228 (GEGHNKKAAEQQAAKAALQKFE) are disordered. The segment covering 216–228 (EQQAAKAALQKFE) has biased composition (low complexity).

The protein belongs to the ribonuclease III family. In terms of assembly, homodimer. Mg(2+) is required as a cofactor.

The protein resides in the cytoplasm. It catalyses the reaction Endonucleolytic cleavage to 5'-phosphomonoester.. Its function is as follows. Digests double-stranded RNA. Involved in the processing of primary rRNA transcript to yield the immediate precursors to the large and small rRNAs (23S and 16S). Processes some mRNAs, and tRNAs when they are encoded in the rRNA operon. Processes pre-crRNA and tracrRNA of type II CRISPR loci if present in the organism. The chain is Ribonuclease 3 from Lactobacillus acidophilus (strain ATCC 700396 / NCK56 / N2 / NCFM).